We begin with the raw amino-acid sequence, 976 residues long: Serine/threonine-protein kinase CLA4 (976 aa).

The interval 1–46 (MTSIYTSDLKNHRRAPPPPNGAAGSGSGSSSGSGSGSGSGSGSGSL) is disordered. Residues 23 to 43 (AGSGSGSSSGSGSGSGSGSGS) show a composition bias toward gly residues. Residues 73–184 (SKRQSGWVHV…WLDAFTTKCP (112 aa)) enclose the PH domain. A disordered region spans residues 207 to 231 (LTNGSLNGNSSSSPTSGLSSSSVLT). In terms of domain architecture, CRIB spans 237 to 250 (VSGPINFTHKVHVG). Disordered regions lie at residues 298 to 522 (GGNS…KIHP) and 559 to 658 (SKKS…QLKK). Low complexity-rich tracts occupy residues 313 to 332 (NSKTNNNNNDPNNYSSAKNN) and 371 to 411 (LNGS…PLNN). Residues 430-440 (SGTSSDTYSNK) are compositionally biased toward polar residues. Basic and acidic residues predominate over residues 441 to 455 (NHQDRSGYEQQRQQR). The span at 456–487 (TDSSQQQQQQQKQHQYQQKSQQQQQQPLSSHQ) shows a compositional bias: low complexity. Over residues 496–505 (QVPPTLPSSG) the composition is skewed to pro residues. Residues 559-583 (SKKSQQQLASKQPSPPSSQQQQQKP) show a composition bias toward low complexity. Polar residues predominate over residues 622–635 (NETSGVSKTPSPTD). The region spanning 685 to 940 (FRIVEKAGQG…TDELLEHSFI (256 aa)) is the Protein kinase domain. ATP contacts are provided by residues 691 to 699 (AGQGASGNV) and Lys-715. The active-site Proton acceptor is Asp-808.

It belongs to the protein kinase superfamily. STE Ser/Thr protein kinase family. STE20 subfamily. In terms of assembly, interacts (via the CRIB domain) with CDC42.

The catalysed reaction is L-seryl-[protein] + ATP = O-phospho-L-seryl-[protein] + ADP + H(+). It catalyses the reaction L-threonyl-[protein] + ATP = O-phospho-L-threonyl-[protein] + ADP + H(+). Its function is as follows. Ser/Thr kinase required for wild-type filamentous growth, chlamydospore formation, and virulence in mouse systemic infection. This chain is Serine/threonine-protein kinase CLA4 (CLA4), found in Candida albicans (strain SC5314 / ATCC MYA-2876) (Yeast).